The chain runs to 437 residues: Type II methylase M.HgiEI (437 aa).

An SAM-dependent MTase C5-type domain is found at F4–E431. The active site involves C75.

This sequence belongs to the class I-like SAM-binding methyltransferase superfamily. C5-methyltransferase family.

The catalysed reaction is a 2'-deoxycytidine in DNA + S-adenosyl-L-methionine = a 5-methyl-2'-deoxycytidine in DNA + S-adenosyl-L-homocysteine + H(+). Its function is as follows. A methylase that recognizes the double-stranded sequence 5'-GGWCC-3', methylates C-? on both strands, and protects the DNA from cleavage by the HgiEI endonuclease. This system is more active than isoschizomeric RM.HgiBI. The sequence is that of Type II methylase M.HgiEI from Herpetosiphon aurantiacus (Herpetosiphon giganteus).